The primary structure comprises 21 residues: TRICCGCYWNGSKDVCSQSCC.

Cystine bridges form between Cys4–Cys20, Cys5–Cys21, and Cys7–Cys16.

Expressed by the salivary gland. This peptide is considered as a venom peptide.

It localises to the secreted. Functionally, injections of 20 uM of this synthetic peptide (Ile) causes partial paralysis to polychaete worms (Nereis virens), the natural prey of terebrid snails. This paralysis may be due to an inhibition of nicotinic receptors at the neuromuscular junction. The polypeptide is Venom peptide Tv1 (Terebra variegata (Variegate auger snail)).